Reading from the N-terminus, the 963-residue chain is Kinesin-1 heavy chain (963 aa).

Ala-2 carries the post-translational modification N-acetylalanine. The 318-residue stretch at 8–325 (NIKVMCRFRP…LLFGQRAKTI (318 aa)) folds into the Kinesin motor domain. An ATP-binding site is contributed by 85-92 (GQTSSGKT). Residue Lys-213 forms a Glycyl lysine isopeptide (Lys-Gly) (interchain with G-Cter in SUMO2) linkage. A coiled-coil region spans residues 329–914 (VCVNVELTAE…AVRSKNMARR (586 aa)). Positions 908 to 963 (SKNMARRGHSAQIAKPIRPGQHPAASPTHPSAIRGGGAFVQNSQPVAVRGGGGKQV) are disordered. The tract at residues 915–963 (GHSAQIAKPIRPGQHPAASPTHPSAIRGGGAFVQNSQPVAVRGGGGKQV) is globular. The residue at position 933 (Ser-933) is a Phosphoserine. Position 956 is an omega-N-methylarginine (Arg-956).

This sequence belongs to the TRAFAC class myosin-kinesin ATPase superfamily. Kinesin family. Kinesin subfamily. As to quaternary structure, oligomer composed of two heavy chains and two light chains. Interacts with GRIP1 and PPP1R42. Interacts with SYBU. Interacts with JAKMIP1. Interacts with PLEKHM2. Interacts with ECPAS. Interacts with ZFYVE27. Found in a complex with OGT, RHOT1, RHOT2 and TRAK1. Interacts with APP (via cytoplasmic domain).

The protein localises to the cytoplasm. The protein resides in the cytoskeleton. Its subcellular location is the cytolytic granule membrane. It localises to the lysosome membrane. In terms of biological role, microtubule-dependent motor required for normal distribution of mitochondria and lysosomes. Can induce formation of neurite-like membrane protrusions in non-neuronal cells in a ZFYVE27-dependent manner. Regulates centrosome and nuclear positioning during mitotic entry. During the G2 phase of the cell cycle in a BICD2-dependent manner, antagonizes dynein function and drives the separation of nuclei and centrosomes. Required for anterograde axonal transportation of MAPK8IP3/JIP3 which is essential for MAPK8IP3/JIP3 function in axon elongation. Through binding with PLEKHM2 and ARL8B, directs lysosome movement toward microtubule plus ends. Involved in NK cell-mediated cytotoxicity. Drives the polarization of cytolytic granules and microtubule-organizing centers (MTOCs) toward the immune synapse between effector NK lymphocytes and target cells. In Homo sapiens (Human), this protein is Kinesin-1 heavy chain.